Here is a 258-residue protein sequence, read N- to C-terminus: C4b-binding protein beta chain (258 aa).

Positions 1–15 (MLCLVVCCLIWLISA) are cleaved as a signal peptide. The 58-residue stretch at 18–75 (GSCSEPPPVNNSVFVGKETEEQILGIYLCIKGYHLVGKKSLVFDPSKEWNSTLPECLL) folds into the Sushi 1; atypical; lacks a Cys domain. Residues asparagine 27, asparagine 67, asparagine 89, asparagine 95, and asparagine 114 are each glycosylated (N-linked (GlcNAc...) asparagine). Intrachain disulfides connect cysteine 46–cysteine 73, cysteine 78–cysteine 118, cysteine 104–cysteine 131, cysteine 136–cysteine 176, and cysteine 162–cysteine 188. Sushi domains follow at residues 76-133 (GHCP…ICRS) and 134-190 (RDCE…TCES). The N-linked (GlcNAc...) asparagine glycan is linked to asparagine 218.

As to quaternary structure, disulfide-linked complex of alpha and beta chains.

Its subcellular location is the secreted. Controls the classical pathway of complement activation. It binds as a cofactor to C3b/C4b inactivator (C3bINA), which then hydrolyzes the complement fragment C4b. It also accelerates the degradation of the C4bC2a complex (C3 convertase) by dissociating the complement fragment C2a. It also interacts with anticoagulant protein S and with serum amyloid P component. The protein is C4b-binding protein beta chain (C4bpb) of Rattus norvegicus (Rat).